The chain runs to 247 residues: 3-deoxy-manno-octulosonate cytidylyltransferase (247 aa).

It belongs to the KdsB family.

Its subcellular location is the cytoplasm. It carries out the reaction 3-deoxy-alpha-D-manno-oct-2-ulosonate + CTP = CMP-3-deoxy-beta-D-manno-octulosonate + diphosphate. The protein operates within nucleotide-sugar biosynthesis; CMP-3-deoxy-D-manno-octulosonate biosynthesis; CMP-3-deoxy-D-manno-octulosonate from 3-deoxy-D-manno-octulosonate and CTP: step 1/1. It functions in the pathway bacterial outer membrane biogenesis; lipopolysaccharide biosynthesis. Functionally, activates KDO (a required 8-carbon sugar) for incorporation into bacterial lipopolysaccharide in Gram-negative bacteria. In Methylobacterium sp. (strain 4-46), this protein is 3-deoxy-manno-octulosonate cytidylyltransferase.